Consider the following 420-residue polypeptide: Phosphoribosylamine--glycine ligase (420 aa).

An ATP-grasp domain is found at 108-314 (KQFMEKYAIP…FAALIDALLH (207 aa)). An ATP-binding site is contributed by 134–195 (LNERGVPIVI…EDFLAGEEFS (62 aa)). Mg(2+)-binding residues include E284 and N286.

Belongs to the GARS family. The cofactor is Mg(2+). Mn(2+) serves as cofactor.

It carries out the reaction 5-phospho-beta-D-ribosylamine + glycine + ATP = N(1)-(5-phospho-beta-D-ribosyl)glycinamide + ADP + phosphate + H(+). It participates in purine metabolism; IMP biosynthesis via de novo pathway; N(1)-(5-phospho-D-ribosyl)glycinamide from 5-phospho-alpha-D-ribose 1-diphosphate: step 2/2. This chain is Phosphoribosylamine--glycine ligase, found in Listeria monocytogenes serovar 1/2a (strain ATCC BAA-679 / EGD-e).